We begin with the raw amino-acid sequence, 347 residues long: Protein RecA (347 aa).

65 to 72 (GPESSGKT) serves as a coordination point for ATP. Residues 325–347 (KLGISDGDVEETEDAPKSLFDEE) are disordered. Positions 338-347 (DAPKSLFDEE) are enriched in basic and acidic residues.

Belongs to the RecA family.

Its subcellular location is the cytoplasm. Functionally, can catalyze the hydrolysis of ATP in the presence of single-stranded DNA, the ATP-dependent uptake of single-stranded DNA by duplex DNA, and the ATP-dependent hybridization of homologous single-stranded DNAs. It interacts with LexA causing its activation and leading to its autocatalytic cleavage. The sequence is that of Protein RecA from Staphylococcus aureus (strain Mu3 / ATCC 700698).